The chain runs to 506 residues: Protein spinster homolog 1 (506 aa).

Residues Met1 to Val42 form a disordered region. The segment covering Pro21 to Leu30 has biased composition (low complexity). The next 12 membrane-spanning stretches (helical) occupy residues Ile52–Val71, Gly87–Leu107, Leu115–Gly135, Val149–Val169, Met176–Ser196, Trp207–Val227, Phe266–Leu286, Leu310–Ala330, Leu344–Ala364, Val373–Leu393, Phe408–Val428, and Leu450–Ile470.

It belongs to the major facilitator superfamily. Spinster (TC 2.A.1.49) family. As to expression, expressed in yolk cells.

The protein resides in the lysosome membrane. It catalyses the reaction a 1-acyl-sn-glycero-3-phosphocholine(out) + H(+)(out) = a 1-acyl-sn-glycero-3-phosphocholine(in) + H(+)(in). It carries out the reaction a 1-acyl-sn-glycero-3-phosphoethanolamine(out) + H(+)(out) = a 1-acyl-sn-glycero-3-phosphoethanolamine(in) + H(+)(in). The enzyme catalyses a 1-O-(1Z-alkenyl)-sn-glycero-3-phosphocholine(out) + H(+)(out) = a 1-O-(1Z-alkenyl)-sn-glycero-3-phosphocholine(in) + H(+)(in). The catalysed reaction is a 1-O-(1Z-alkenyl)-sn-glycero-3-phosphoethanolamine(out) + H(+)(out) = a 1-O-(1Z-alkenyl)-sn-glycero-3-phosphoethanolamine(in) + H(+)(in). Mediates the rate-limiting, proton-dependent, lysosomal efflux of lysophospholipids. Selective for zwitterionic headgroups such as lysophosphatidylcholine (LPC) and lysophosphatidylethanolamine (LPE). Essential player in lysosomal homeostasis. Critical for embryogenesis. Involved in the regulation of developmental senescence. In Danio rerio (Zebrafish), this protein is Protein spinster homolog 1 (spns1).